The sequence spans 159 residues: Ribosomal RNA large subunit methyltransferase H (159 aa).

Residues leucine 76, glycine 108, and 127-132 contribute to the S-adenosyl-L-methionine site; that span reads FSKMTL.

Belongs to the RNA methyltransferase RlmH family. In terms of assembly, homodimer.

The protein resides in the cytoplasm. It catalyses the reaction pseudouridine(1915) in 23S rRNA + S-adenosyl-L-methionine = N(3)-methylpseudouridine(1915) in 23S rRNA + S-adenosyl-L-homocysteine + H(+). Its function is as follows. Specifically methylates the pseudouridine at position 1915 (m3Psi1915) in 23S rRNA. The polypeptide is Ribosomal RNA large subunit methyltransferase H (Bacillus anthracis (strain CDC 684 / NRRL 3495)).